Reading from the N-terminus, the 215-residue chain is Small ribosomal subunit protein eS1 (215 aa).

Belongs to the eukaryotic ribosomal protein eS1 family.

The chain is Small ribosomal subunit protein eS1 from Halorubrum lacusprofundi (strain ATCC 49239 / DSM 5036 / JCM 8891 / ACAM 34).